The following is a 546-amino-acid chain: Cytochrome P450 monooxygenase fumoB (546 aa).

Residues 13-33 (LGYYEKLAGILGIIGLVLLFW) form a helical membrane-spanning segment. The N-linked (GlcNAc...) asparagine glycan is linked to Asn147. Cys488 contacts heme.

It belongs to the cytochrome P450 family. Requires heme as cofactor.

The protein resides in the membrane. It participates in secondary metabolite biosynthesis. Its function is as follows. Cytochrome P450 monooxygenase; part of the gene cluster that mediates the biosynthesis of fumosorinone, a 2-pyridone alkaloid that acts as an inhibitor of protein tyrosine phosphatase 1B which is implicated asa negative regulator of insulin receptor signaling and a potential drug target for the treatment of type II diabetes and other associated metabolic syndromes. The polyketide-amino acid backbone of fumosorinone is first assembled by the PKS-NRPS hybrid fumoS. The PKS modules condense one acetyl-CoA starter unit with 7 malonyl-CoA units, programmed C-methylations occurring after the first 3 and the sixth extensions, and cycles of full reduction occurring after the first 2 extensions. Because fumoS lacks a designated enoyl reductase (ER) domain, the required activity is provided the enoyl reductase fumoC. Upon formation of the polyketide backbone on the thiotemplate, the polyketide is transferred to the NRPS module and linked to tyrosine to produce the acyltetramic acid intermediate called prefumosorinone A. The cytochrome P450 monooxygenase fumoA then probably catalyzes an unprecedented oxidative ring expansion of prefumosorinone A to form prefumosorinone B which contains the 2-pyridone core of fumosorinone. The cytochrome P450 monooxygenase fumoB might hydroxylate the nitrogen of prefumosorinone B, but not the acyltetramic acid prefumosorinone A, to form fumosorinone. The polypeptide is Cytochrome P450 monooxygenase fumoB (Cordyceps fumosorosea (strain ARSEF 2679) (Isaria fumosorosea)).